A 270-amino-acid chain; its full sequence is 3-methyl-2-oxobutanoate hydroxymethyltransferase (270 aa).

Mg(2+)-binding residues include Asp43 and Asp82. 3-methyl-2-oxobutanoate is bound by residues 43 to 44, Asp82, and Lys112; that span reads DS. Residue Glu114 participates in Mg(2+) binding. Residue Glu179 is the Proton acceptor of the active site.

It belongs to the PanB family. As to quaternary structure, homodecamer; pentamer of dimers. Mg(2+) is required as a cofactor.

It localises to the cytoplasm. The catalysed reaction is 3-methyl-2-oxobutanoate + (6R)-5,10-methylene-5,6,7,8-tetrahydrofolate + H2O = 2-dehydropantoate + (6S)-5,6,7,8-tetrahydrofolate. It functions in the pathway cofactor biosynthesis; (R)-pantothenate biosynthesis; (R)-pantoate from 3-methyl-2-oxobutanoate: step 1/2. Functionally, catalyzes the reversible reaction in which hydroxymethyl group from 5,10-methylenetetrahydrofolate is transferred onto alpha-ketoisovalerate to form ketopantoate. This Staphylococcus saprophyticus subsp. saprophyticus (strain ATCC 15305 / DSM 20229 / NCIMB 8711 / NCTC 7292 / S-41) protein is 3-methyl-2-oxobutanoate hydroxymethyltransferase.